Here is a 589-residue protein sequence, read N- to C-terminus: Protein OS-9 homolog (589 aa).

A signal peptide spans Met1–Cys21. N-linked (GlcNAc...) asparagine glycosylation is found at Asn17, Asn61, and Asn90. The MRH domain maps to Lys130–Leu288. Cys132 and Cys148 form a disulfide bridge. A mannooligosaccharide derivative contacts are provided by Trp143, Gln155, Asp241, Arg247, Glu270, and Tyr276. 2 cysteine pairs are disulfide-bonded: Cys240–Cys274 and Cys255–Cys286. Residue Asn426 is glycosylated (N-linked (GlcNAc...) asparagine). Positions Gly497–Gln520 are disordered. Basic and acidic residues predominate over residues Lys509–Lys519. The short motif at His586–Leu589 is the Prevents secretion from ER element.

It belongs to the OS-9 family. As to quaternary structure, interacts with missfolded ER lumenal proteins.

Its subcellular location is the endoplasmic reticulum membrane. Functionally, lectin involved in the quality control of the secretory pathway. As a member of the endoplasmic reticulum-associated degradation lumenal (ERAD-L) surveillance system, targets misfolded endoplasmic reticulum lumenal glycoproteins for degradation. This Debaryomyces hansenii (strain ATCC 36239 / CBS 767 / BCRC 21394 / JCM 1990 / NBRC 0083 / IGC 2968) (Yeast) protein is Protein OS-9 homolog (YOS9).